The primary structure comprises 329 residues: Glycerol-3-phosphate dehydrogenase [NAD(P)+] (329 aa).

Residues Trp11, Arg30, and Lys103 each coordinate NADPH. The sn-glycerol 3-phosphate site is built by Lys103, Gly132, and Ser134. NADPH is bound at residue Ala136. 5 residues coordinate sn-glycerol 3-phosphate: Lys187, Asp240, Ser250, Arg251, and Asn252. Lys187 serves as the catalytic Proton acceptor. Arg251 serves as a coordination point for NADPH. NADPH contacts are provided by Val275 and Glu277.

This sequence belongs to the NAD-dependent glycerol-3-phosphate dehydrogenase family.

The protein localises to the cytoplasm. It carries out the reaction sn-glycerol 3-phosphate + NAD(+) = dihydroxyacetone phosphate + NADH + H(+). It catalyses the reaction sn-glycerol 3-phosphate + NADP(+) = dihydroxyacetone phosphate + NADPH + H(+). Its pathway is membrane lipid metabolism; glycerophospholipid metabolism. Catalyzes the reduction of the glycolytic intermediate dihydroxyacetone phosphate (DHAP) to sn-glycerol 3-phosphate (G3P), the key precursor for phospholipid synthesis. The sequence is that of Glycerol-3-phosphate dehydrogenase [NAD(P)+] from Methylobacillus flagellatus (strain ATCC 51484 / DSM 6875 / VKM B-1610 / KT).